We begin with the raw amino-acid sequence, 130 residues long: Small ribosomal subunit protein uS11 (130 aa).

The protein belongs to the universal ribosomal protein uS11 family. In terms of assembly, part of the 30S ribosomal subunit. Interacts with proteins S7 and S18. Binds to IF-3.

In terms of biological role, located on the platform of the 30S subunit, it bridges several disparate RNA helices of the 16S rRNA. Forms part of the Shine-Dalgarno cleft in the 70S ribosome. The sequence is that of Small ribosomal subunit protein uS11 from Prochlorococcus marinus (strain MIT 9303).